The sequence spans 105 residues: Small ribosomal subunit protein uS10 (105 aa).

It belongs to the universal ribosomal protein uS10 family. In terms of assembly, part of the 30S ribosomal subunit.

Functionally, involved in the binding of tRNA to the ribosomes. This chain is Small ribosomal subunit protein uS10, found in Chlamydia muridarum (strain MoPn / Nigg).